Consider the following 702-residue polypeptide: Dynein intermediate chain 2, ciliary (702 aa).

Residues 1-11 (MPVKSTKTKGG) show a composition bias toward low complexity. Disordered stretches follow at residues 1–64 (MPVK…IKPD), 128–226 (DEAR…FSST), and 243–272 (QEKAKEKKAAPSKKDDDKSKKKLTALETQS). 2 stretches are compositionally biased toward basic and acidic residues: residues 36 to 52 (GKKDDDDATEAGEHGGE) and 152 to 176 (GEEKKEEDGEQKTEEPKEGEKRDEE). Residues 189-206 (KLTNQFNFSERASQTYNN) are compositionally biased toward polar residues. A compositionally biased stretch (basic and acidic residues) spans 243–261 (QEKAKEKKAAPSKKDDDKS). WD repeat units follow at residues 380-420 (PTDS…ANPV), 429-472 (KHTD…LTYT), 490-533 (TQLT…QFLD), 537-577 (AHHM…GPMF), 580-620 (DLGS…YEPI), and 628-667 (KKKTKLTHITFNPNFPIVLVGDDRGYVSSLKLSPNLRKVP).

It belongs to the dynein intermediate chain family. As to quaternary structure, consists of at least two heavy chains (alpha and beta), three intermediate chains and several light chains.

The protein resides in the cytoplasm. It localises to the cytoskeleton. It is found in the cilium axoneme. Its function is as follows. Microtubule-binding protein that may be involved in dynein outer arm assembly on the axoneme. The protein is Dynein intermediate chain 2, ciliary of Heliocidaris crassispina (Sea urchin).